A 4243-amino-acid chain; its full sequence is Fibrocystin-L (4243 aa).

A signal peptide spans 1-20 (MGHLWLLGIWGLCGLLLCAA). At 21 to 4210 (DPSTDGSQII…KASTVGTYAQ (4190 aa)) the chain is on the extracellular side. 3 consecutive IPT/TIG domains span residues 31–129 (PKVT…TCKG), 146–255 (PTIR…KMAY), and 270–361 (AEVT…ILEY). O-linked (GalNAc...) threonine glycosylation is present at T122. Residues 337–492 (PGGRGLKLEV…NVYTEQQTGD (156 aa)) enclose the PA14 domain. T445 carries O-linked (GalNAc...) threonine glycosylation. 11 consecutive IPT/TIG domains span residues 1067-1151 (PLVL…EFYF), 1155-1234 (SQIS…AFSY), 1240-1322 (PIIT…RDKL), 1330-1469 (LEVT…SFSY), 1566-1649 (PSIS…TLSN), 1659-1743 (PNID…TFSY), 1749-1828 (PYIT…NLTV), 1831-1910 (PPVA…LFTY), 1916-1997 (PFLR…VFEY), 1999-2085 (LNIQ…PFTY), and 2091-2176 (PLIT…DFLY). Residues T1803 and T1839 are each glycosylated (O-linked (GalNAc...) threonine). One can recognise a G8 1 domain in the interval 2184–2304 (FSWGGKSPPE…VPVTWTRLAH (121 aa)). Residue T2320 is glycosylated (O-linked (GalNAc...) threonine). PbH1 repeat units follow at residues 2508–2530 (THHL…FIED), 2566–2588 (NPNN…WYRM), 2665–2687 (GGAL…ETKR), and 2733–2756 (SEGL…ALGV). Residues 3036-3174 (SFWQSSRENN…HSIYKTKLSE (139 aa)) form the G8 2 domain. PbH1 repeat units lie at residues 3293–3315 (KGNA…RDST), 3355–3377 (TDGL…RIWG), 3416–3438 (GTNT…RIDG), 3471–3493 (PGCS…YFQT), and 3527–3548 (SKNV…NCSD). A glycan (O-linked (GalNAc...) threonine) is linked at T3736. Residues 4211–4231 (IMTVVISCLVGRMWLLEIFMA) form a helical membrane-spanning segment. The Cytoplasmic segment spans residues 4232–4243 (AVSTLNITLRSY).

Its subcellular location is the membrane. It localises to the cell projection. The protein resides in the stereocilium membrane. In terms of biological role, component of hair-cell stereocilia coat. Required for normal hearing. The sequence is that of Fibrocystin-L (PKHD1L1) from Homo sapiens (Human).